We begin with the raw amino-acid sequence, 181 residues long: MFKKFDEKENVSNCIQLKTSVIKGIKNQLLDQFPNIDDWLNQIMPKKDPVKIVRCHEHIEILTVNGELLFFRQREGPFYPTLRLLHKYPFILPHQQVDKGAIKFVLSGANIMCPGLTSPGAKLYPAESDTVVAIMAEGKQHALCVGVMKMSADDIEKVNMGIGIENVHYLNDGLWHMKTYK.

Residues 92–171 (LPHQQVDKGA…IGIENVHYLN (80 aa)) form the PUA domain.

This sequence belongs to the MCTS1 family.

The protein resides in the cytoplasm. Its function is as follows. Plays a role as translation enhancer and involved in cell cycle regulation. The protein is Malignant T-cell-amplified sequence 1 (mcts1) of Danio rerio (Zebrafish).